A 721-amino-acid chain; its full sequence is Exocyst complex component 3-like protein 4 (721 aa).

2 disordered regions span residues 1-52 (MPLP…SLGM) and 94-135 (GLTA…QAES). The segment covering 22–37 (SQTLPVTTWKSNSMKE) has biased composition (polar residues). Phosphoserine is present on S515.

The protein belongs to the SEC6 family.

This is Exocyst complex component 3-like protein 4 (Exoc3l4) from Mus musculus (Mouse).